Here is a 373-residue protein sequence, read N- to C-terminus: UDP-N-acetylglucosamine--N-acetylmuramyl-(pentapeptide) pyrophosphoryl-undecaprenol N-acetylglucosamine transferase (373 aa).

UDP-N-acetyl-alpha-D-glucosamine contacts are provided by residues Thr14–Gly16, Asn128, Arg165, Ser199, and Gln295.

The protein belongs to the glycosyltransferase 28 family. MurG subfamily.

The protein resides in the cell membrane. The enzyme catalyses di-trans,octa-cis-undecaprenyl diphospho-N-acetyl-alpha-D-muramoyl-L-alanyl-D-glutamyl-meso-2,6-diaminopimeloyl-D-alanyl-D-alanine + UDP-N-acetyl-alpha-D-glucosamine = di-trans,octa-cis-undecaprenyl diphospho-[N-acetyl-alpha-D-glucosaminyl-(1-&gt;4)]-N-acetyl-alpha-D-muramoyl-L-alanyl-D-glutamyl-meso-2,6-diaminopimeloyl-D-alanyl-D-alanine + UDP + H(+). It functions in the pathway cell wall biogenesis; peptidoglycan biosynthesis. Cell wall formation. Catalyzes the transfer of a GlcNAc subunit on undecaprenyl-pyrophosphoryl-MurNAc-pentapeptide (lipid intermediate I) to form undecaprenyl-pyrophosphoryl-MurNAc-(pentapeptide)GlcNAc (lipid intermediate II). This is UDP-N-acetylglucosamine--N-acetylmuramyl-(pentapeptide) pyrophosphoryl-undecaprenol N-acetylglucosamine transferase from Mycobacterium sp. (strain KMS).